The primary structure comprises 309 residues: tRNA uridine(34) hydroxylase (309 aa).

Residues 130-225 form the Rhodanese domain; the sequence is RGEEVVFFDG…YGEKYGNDGL (96 aa). Cys-185 functions as the Cysteine persulfide intermediate in the catalytic mechanism.

This sequence belongs to the TrhO family.

The catalysed reaction is uridine(34) in tRNA + AH2 + O2 = 5-hydroxyuridine(34) in tRNA + A + H2O. In terms of biological role, catalyzes oxygen-dependent 5-hydroxyuridine (ho5U) modification at position 34 in tRNAs. This Corynebacterium aurimucosum (strain ATCC 700975 / DSM 44827 / CIP 107346 / CN-1) (Corynebacterium nigricans) protein is tRNA uridine(34) hydroxylase.